Reading from the N-terminus, the 188-residue chain is Threonylcarbamoyl-AMP synthase (188 aa).

Residues 3 to 188 (QLHPSDIKDV…RSGKILRNGQ (186 aa)) form the YrdC-like domain.

It belongs to the SUA5 family. TsaC subfamily.

It localises to the cytoplasm. The enzyme catalyses L-threonine + hydrogencarbonate + ATP = L-threonylcarbamoyladenylate + diphosphate + H2O. Required for the formation of a threonylcarbamoyl group on adenosine at position 37 (t(6)A37) in tRNAs that read codons beginning with adenine. Catalyzes the conversion of L-threonine, HCO(3)(-)/CO(2) and ATP to give threonylcarbamoyl-AMP (TC-AMP) as the acyladenylate intermediate, with the release of diphosphate. This Shewanella oneidensis (strain ATCC 700550 / JCM 31522 / CIP 106686 / LMG 19005 / NCIMB 14063 / MR-1) protein is Threonylcarbamoyl-AMP synthase.